Consider the following 215-residue polypeptide: Cytochrome c biogenesis ATP-binding export protein CcmA (215 aa).

Positions 3 to 215 (LEAENLAGER…MAAFSVEDIA (213 aa)) constitute an ABC transporter domain. 35-42 (GPNGSGKS) provides a ligand contact to ATP.

It belongs to the ABC transporter superfamily. CcmA exporter (TC 3.A.1.107) family. In terms of assembly, the complex is composed of two ATP-binding proteins (CcmA) and two transmembrane proteins (CcmB).

The protein resides in the cell inner membrane. It carries out the reaction heme b(in) + ATP + H2O = heme b(out) + ADP + phosphate + H(+). Part of the ABC transporter complex CcmAB involved in the biogenesis of c-type cytochromes; once thought to export heme, this seems not to be the case, but its exact role is uncertain. Responsible for energy coupling to the transport system. The sequence is that of Cytochrome c biogenesis ATP-binding export protein CcmA from Brucella melitensis biotype 1 (strain ATCC 23456 / CCUG 17765 / NCTC 10094 / 16M).